The chain runs to 95 residues: UPF0235 protein PTH_1821 (95 aa).

Belongs to the UPF0235 family.

The protein is UPF0235 protein PTH_1821 of Pelotomaculum thermopropionicum (strain DSM 13744 / JCM 10971 / SI).